Reading from the N-terminus, the 623-residue chain is Leucine aminopeptidase 2 (623 aa).

Residues 140 to 142 and 266 to 271 contribute to the a peptide site; these read QLE and PYGGME. Residue H295 coordinates Zn(2+). E296 (proton acceptor) is an active-site residue. Residues H299 and E318 each contribute to the Zn(2+) site. Y382 functions as the Proton donor in the catalytic mechanism.

This sequence belongs to the peptidase M1 family. Zn(2+) is required as a cofactor.

It is found in the cytoplasm. The protein localises to the nucleus. The catalysed reaction is an epoxide + H2O = an ethanediol. Functionally, aminopeptidase that preferentially cleaves di- and tripeptides. Also has low epoxide hydrolase activity (in vitro). Can hydrolyze the epoxide leukotriene LTA(4) but it forms preferentially 5,6-dihydroxy-7,9,11,14-eicosatetraenoic acid rather than the cytokine leukotriene B(4) as the product compared to the homologous mammalian enzyme (in vitro). This Eremothecium gossypii (strain ATCC 10895 / CBS 109.51 / FGSC 9923 / NRRL Y-1056) (Yeast) protein is Leucine aminopeptidase 2.